The sequence spans 743 residues: Phosphoribosylformylglycinamidine synthase subunit PurL (743 aa).

The active site involves H50. Y53 and K92 together coordinate ATP. Position 94 (E94) interacts with Mg(2+). Substrate-binding positions include 95-98 and R117; that span reads SHNH. The Proton acceptor role is filled by H96. D118 is a Mg(2+) binding site. Q241 is a substrate binding site. Position 269 (D269) interacts with Mg(2+). 313–315 lines the substrate pocket; the sequence is ESQ. ATP is bound by residues D494 and G531. Residue N532 participates in Mg(2+) binding. Residue S534 coordinates substrate.

The protein belongs to the FGAMS family. As to quaternary structure, monomer. Part of the FGAM synthase complex composed of 1 PurL, 1 PurQ and 2 PurS subunits.

Its subcellular location is the cytoplasm. The catalysed reaction is N(2)-formyl-N(1)-(5-phospho-beta-D-ribosyl)glycinamide + L-glutamine + ATP + H2O = 2-formamido-N(1)-(5-O-phospho-beta-D-ribosyl)acetamidine + L-glutamate + ADP + phosphate + H(+). It functions in the pathway purine metabolism; IMP biosynthesis via de novo pathway; 5-amino-1-(5-phospho-D-ribosyl)imidazole from N(2)-formyl-N(1)-(5-phospho-D-ribosyl)glycinamide: step 1/2. Functionally, part of the phosphoribosylformylglycinamidine synthase complex involved in the purines biosynthetic pathway. Catalyzes the ATP-dependent conversion of formylglycinamide ribonucleotide (FGAR) and glutamine to yield formylglycinamidine ribonucleotide (FGAM) and glutamate. The FGAM synthase complex is composed of three subunits. PurQ produces an ammonia molecule by converting glutamine to glutamate. PurL transfers the ammonia molecule to FGAR to form FGAM in an ATP-dependent manner. PurS interacts with PurQ and PurL and is thought to assist in the transfer of the ammonia molecule from PurQ to PurL. The chain is Phosphoribosylformylglycinamidine synthase subunit PurL from Rhizobium meliloti (strain 1021) (Ensifer meliloti).